Reading from the N-terminus, the 102-residue chain is Large ribosomal subunit protein bL21 (102 aa).

It belongs to the bacterial ribosomal protein bL21 family. Part of the 50S ribosomal subunit. Contacts protein L20.

Its function is as follows. This protein binds to 23S rRNA in the presence of protein L20. In Bifidobacterium longum subsp. infantis (strain ATCC 15697 / DSM 20088 / JCM 1222 / NCTC 11817 / S12), this protein is Large ribosomal subunit protein bL21.